We begin with the raw amino-acid sequence, 271 residues long: Serine O-acetyltransferase (271 aa).

C112 functions as the Acyl-thioester intermediate in the catalytic mechanism. The active-site Proton acceptor is H204. The active site involves E206.

It belongs to the MetA family.

The catalysed reaction is L-serine + acetyl-CoA = O-acetyl-L-serine + CoA. Its pathway is amino-acid biosynthesis; L-cysteine biosynthesis; L-cysteine from L-serine: step 1/2. Functionally, catalyzes the formation of O-acetylserine (OAS) from L-serine and acetyl-CoA. To a lesser extent, is also able to use succinyl-CoA and propionyl-CoA as acyl donors, but not butyryl-CoA. Does not acylate D-serine and L-homoserine. The sequence is that of Serine O-acetyltransferase from Lacticaseibacillus casei (Lactobacillus casei).